Consider the following 348-residue polypeptide: tRNA pseudouridine synthase D (348 aa).

Asp-84 (nucleophile) is an active-site residue. Residues 162-308 (GVPNYFGPQR…ARMDRRPLCL (147 aa)) enclose the TRUD domain.

The protein belongs to the pseudouridine synthase TruD family.

It carries out the reaction uridine(13) in tRNA = pseudouridine(13) in tRNA. Responsible for synthesis of pseudouridine from uracil-13 in transfer RNAs. The sequence is that of tRNA pseudouridine synthase D from Chromohalobacter salexigens (strain ATCC BAA-138 / DSM 3043 / CIP 106854 / NCIMB 13768 / 1H11).